We begin with the raw amino-acid sequence, 142 residues long: Nucleoside diphosphate kinase (142 aa).

ATP is bound by residues Lys11, Phe59, Arg87, Thr93, Arg104, and Asn114. The Pros-phosphohistidine intermediate role is filled by His117.

Belongs to the NDK family. As to quaternary structure, homotetramer. The cofactor is Mg(2+).

The protein resides in the cytoplasm. The catalysed reaction is a 2'-deoxyribonucleoside 5'-diphosphate + ATP = a 2'-deoxyribonucleoside 5'-triphosphate + ADP. It catalyses the reaction a ribonucleoside 5'-diphosphate + ATP = a ribonucleoside 5'-triphosphate + ADP. Major role in the synthesis of nucleoside triphosphates other than ATP. The ATP gamma phosphate is transferred to the NDP beta phosphate via a ping-pong mechanism, using a phosphorylated active-site intermediate. The polypeptide is Nucleoside diphosphate kinase (Dechloromonas aromatica (strain RCB)).